The following is a 252-amino-acid chain: Phosphomannomutase (252 aa).

The active-site Nucleophile is Asp-13. Positions 13 and 15 each coordinate Mg(2+). Asp-15 (proton donor/acceptor) is an active-site residue. Alpha-D-mannose 1-phosphate contacts are provided by Arg-22, Arg-124, Arg-135, Arg-142, Ser-180, and Asp-182. 3 residues coordinate Mg(2+): Asp-208, Tyr-220, and Thr-225.

Belongs to the eukaryotic PMM family. As to quaternary structure, homodimer. Requires Mg(2+) as cofactor.

It localises to the cytoplasm. The catalysed reaction is alpha-D-mannose 1-phosphate = D-mannose 6-phosphate. It participates in nucleotide-sugar biosynthesis; GDP-alpha-D-mannose biosynthesis; alpha-D-mannose 1-phosphate from D-fructose 6-phosphate: step 2/2. Catalyzes the interconversion of mannose-6-phosphate to mannose-1-phosphate, the precursor for the synthesis of GDP-mannose. GDP-mannose is an essential sugar nucleotide for the synthesis of D-mannose-containing cell wall polysaccharides (galactomannans and glucomannans), glycolipids, glycoproteins and the antioxidant L-ascorbate. Can complement the yeast temperature-sensitive mutant sec53-6. In Solanum lycopersicum (Tomato), this protein is Phosphomannomutase.